The following is a 270-amino-acid chain: Type III pantothenate kinase (270 aa).

Position 16-23 (16-23 (EIGNTTAM)) interacts with ATP. Substrate is bound by residues Tyr106 and 113–116 (GADR). Asp115 serves as the catalytic Proton acceptor. Position 136 (Asp136) interacts with K(+). Thr139 serves as a coordination point for ATP. Residue Thr191 coordinates substrate.

It belongs to the type III pantothenate kinase family. Homodimer. It depends on NH4(+) as a cofactor. Requires K(+) as cofactor.

Its subcellular location is the cytoplasm. The enzyme catalyses (R)-pantothenate + ATP = (R)-4'-phosphopantothenate + ADP + H(+). It functions in the pathway cofactor biosynthesis; coenzyme A biosynthesis; CoA from (R)-pantothenate: step 1/5. Catalyzes the phosphorylation of pantothenate (Pan), the first step in CoA biosynthesis. This is Type III pantothenate kinase from Chlorobium luteolum (strain DSM 273 / BCRC 81028 / 2530) (Pelodictyon luteolum).